The chain runs to 273 residues: Salivary glue protein Sgs-3 (273 aa).

The N-terminal stretch at 1–23 (MKLTIAISLASILLLSVAHVAQG) is a signal peptide. The span at 47-57 (TTTTTTTTCAP) shows a compositional bias: low complexity. Residues 47 to 225 (TTTTTTTTCA…TPKPTNKPGC (179 aa)) are disordered. Residues 58–67 (PTRPPPPPCT) are compositionally biased toward pro residues. Residues 83 to 225 (RRTTTTTRQT…TPKPTNKPGC (143 aa)) are compositionally biased toward low complexity.

In Drosophila yakuba (Fruit fly), this protein is Salivary glue protein Sgs-3 (Sgs3).